Reading from the N-terminus, the 224-residue chain is Viral late gene transcription factor 3 (224 aa).

A zinc finger spans residues 6–26; the sequence is CSGCRHNGIVSEQGYEYCIFC.

This sequence belongs to the orthopoxvirus VLTF-3/OPG127 family. As to quaternary structure, interacts with the late transcription elongation factor VLTF-4/OPG110. Interacts with the late transcription factors VLTF-1/OPG093.

Functionally, acts with RNA polymerase to initiate transcription from late gene promoters. The sequence is that of Viral late gene transcription factor 3 (OPG127) from Vaccinia virus (strain Ankara) (VACV).